The chain runs to 326 residues: MEITFLGTSSGVPTRNRNVSSIALRLPQRAELWLFDCGEGTQHQFLRSEVKISQLTRIFITHLHGDHIFGLMGLLASSGLAGSGQGIEIYGPEGLGDYLEACCRFSSTHLGKRLKVHTVRENGLIYEDKDFQVHCGLLKHRIPAYGYRVEEKQRPGRFNVEQAEALGIPFGPIYGQLKQGKTVTLEDGRRIRGQDLCEPPEPGRKFVYCTDTVFCEEAIALAQEADLLVHEATFAHQDAQLAFDRLHSTSTMAAQVALLANVKQLIMTHFSPRYAPGNPLQLENLLAEAQAIFPNTRLARDFLTVEIPRRTADPAIAMSTPQASPA.

Zn(2+)-binding residues include His-62, His-64, Asp-66, His-67, His-140, Asp-211, and His-269. Asp-66 functions as the Proton acceptor in the catalytic mechanism.

Belongs to the RNase Z family. In terms of assembly, homodimer. Requires Zn(2+) as cofactor.

It carries out the reaction Endonucleolytic cleavage of RNA, removing extra 3' nucleotides from tRNA precursor, generating 3' termini of tRNAs. A 3'-hydroxy group is left at the tRNA terminus and a 5'-phosphoryl group is left at the trailer molecule.. Its function is as follows. Zinc phosphodiesterase, which displays some tRNA 3'-processing endonuclease activity. Probably involved in tRNA maturation, by removing a 3'-trailer from precursor tRNA. In Synechocystis sp. (strain ATCC 27184 / PCC 6803 / Kazusa), this protein is Ribonuclease Z.